Reading from the N-terminus, the 347-residue chain is tRNA N6-adenosine threonylcarbamoyltransferase (347 aa).

Residues histidine 110 and histidine 114 each contribute to the Fe cation site. Substrate-binding positions include 133–137 (VVSGG), aspartate 168, glycine 181, aspartate 185, and asparagine 277. Aspartate 305 serves as a coordination point for Fe cation.

It belongs to the KAE1 / TsaD family. Fe(2+) serves as cofactor.

The protein localises to the cytoplasm. It carries out the reaction L-threonylcarbamoyladenylate + adenosine(37) in tRNA = N(6)-L-threonylcarbamoyladenosine(37) in tRNA + AMP + H(+). Its function is as follows. Required for the formation of a threonylcarbamoyl group on adenosine at position 37 (t(6)A37) in tRNAs that read codons beginning with adenine. Is involved in the transfer of the threonylcarbamoyl moiety of threonylcarbamoyl-AMP (TC-AMP) to the N6 group of A37, together with TsaE and TsaB. TsaD likely plays a direct catalytic role in this reaction. The chain is tRNA N6-adenosine threonylcarbamoyltransferase from Kineococcus radiotolerans (strain ATCC BAA-149 / DSM 14245 / SRS30216).